The primary structure comprises 578 residues: Monooxygenase cfoE (578 aa).

The chain crosses the membrane as a helical span at residues 549 to 569; sequence IVLSGVPLVVFGSLHLVLWIF.

It belongs to the FMO family. FAD serves as cofactor.

The protein resides in the membrane. It functions in the pathway secondary metabolite biosynthesis; flavonoid biosynthesis. Monooxygenase; part of the gene cluster that mediates the biosynthesis of chlorflavonin, a fungal flavonoid with acetolactate synthase inhibitory activity. Within the pathway, cfoE is responsible for the chlorination of the flavonoid skeleton at position C3'. The pathway begins with the PKS-NRPS hybrid synthetase cfoA that uses benzoic acid or p-hydroxybenzoic acid as a starter unit with four rounds of chain elongation using malonyl-CoA to form the chalcone skeleton. Then, a new type of chalcone isomerase, cfoK, catalyzes the conversion of the chalcone into a flavanone by a histidine-mediated oxa-Michael addition mechanism. The desaturation of flavanone to flavone is catalyzed by a new type of flavone synthase, the flavin mononucleotide (FMN)-dependent oxidoreductase cfoJ. Monooxygenases cfoF, cfoG, and P450 cfoH are responsible for the hydroxylation of the flavonoid skeleton at sites C3, C8, and C2', respectively. Like cfoF, the dehydratase cfoI plays also a role in the hydroxylation of position C3. Methyltransferases cfoB, cfoC, and cfoD then catalyze the methylation of C7-OH, C8-OH, and C3-OH, respectively. Finally, the monooxygenase cfoE is responsible for the chlorination of flavonoid at position C3'. The chain is Monooxygenase cfoE from Aspergillus candidus.